Reading from the N-terminus, the 329-residue chain is Carbohydrate sulfotransferase chst-1 (329 aa).

Over 1 to 3 (MLK) the chain is Cytoplasmic. Residues 4–23 (WFIISCCLLTAISYSTYYLF) traverse the membrane as a helical; Signal-anchor for type II membrane protein segment. At 24–329 (TSNSWIKTVK…FDFDTTFINS (306 aa)) the chain is on the lumenal side. Residues 91 to 97 (KKSMSTL) and 157 to 165 (RDPIARFIS) contribute to the 3'-phosphoadenylyl sulfate site.

It belongs to the sulfotransferase 2 family. In terms of tissue distribution, highly expressed in the head and tail of hermaphrodites, in particular in amphid and phasmid sheath cells.

It is found in the golgi apparatus membrane. It catalyses the reaction chondroitin beta-D-glucuronate + n 3'-phosphoadenylyl sulfate = chondroitin 4'-sulfate + n adenosine 3',5'-bisphosphate + n H(+). Functionally, catalyzes the transfer of sulfate to position 4 of non-reducing N-acetylgalactosamine (GalNAc) residue of chondroitin. The polypeptide is Carbohydrate sulfotransferase chst-1 (Caenorhabditis elegans).